A 1061-amino-acid chain; its full sequence is Translation initiation factor IF-2 (1061 aa).

2 disordered regions span residues 51–199 (FARG…VAVK) and 250–460 (AFQA…IPTE). The segment covering 67–77 (NEPKPKIDWSR) has biased composition (basic and acidic residues). 5 stretches are compositionally biased toward low complexity: residues 97–113 (VAAA…KAPV), 120–130 (RPSAPRPAVTA), 167–177 (VPQPRQPSAVV), 184–199 (TPAI…VAVK), and 250–278 (AFQA…AEAP). A compositionally biased stretch (pro residues) spans 279-291 (PVAPEKPAVPAPP). The segment covering 340 to 360 (SPGGPGGPGGGYGQRPSGPGG) has biased composition (gly residues). The segment covering 381 to 391 (GFNNGPRPGFG) has biased composition (low complexity). A compositionally biased stretch (gly residues) spans 392–405 (QRPGGFGQRPGMGA). One can recognise a tr-type G domain in the interval 552–728 (SRPPVVTVMG…CLVADLGNLK (177 aa)). The G1 stretch occupies residues 561–568 (GHVDHGKT). Position 561-568 (561-568 (GHVDHGKT)) interacts with GTP. Residues 586–590 (GITQH) are G2. A G3 region spans residues 614–617 (DTPG). Residues 614–618 (DTPGH) and 668–671 (NKID) each bind GTP. The interval 668–671 (NKID) is G4. The tract at residues 704–706 (SAK) is G5.

It belongs to the TRAFAC class translation factor GTPase superfamily. Classic translation factor GTPase family. IF-2 subfamily.

It is found in the cytoplasm. One of the essential components for the initiation of protein synthesis. Protects formylmethionyl-tRNA from spontaneous hydrolysis and promotes its binding to the 30S ribosomal subunits. Also involved in the hydrolysis of GTP during the formation of the 70S ribosomal complex. The chain is Translation initiation factor IF-2 from Acidobacterium capsulatum (strain ATCC 51196 / DSM 11244 / BCRC 80197 / JCM 7670 / NBRC 15755 / NCIMB 13165 / 161).